The sequence spans 242 residues: DNA repair protein RecO (242 aa).

Belongs to the RecO family. In terms of assembly, monomer.

In terms of biological role, involved in DNA repair and RecF pathway recombination. The chain is DNA repair protein RecO from Shigella flexneri.